The sequence spans 168 residues: MVDEHKAHKAILAYEKGWLAFSLAMLFVFIALIAYTLATHTAGVIPAGKLERVDPTTVRQEGPWADPAQAVVQTGPNQYTVYVLAFAFGYQPNPIEVPQGAEIVFKITSPDVIHGFHVEGTNINVEVLPGEVSTVRYTFKRPGEYRIICNQYCGLGHQNMFGTIVVKE.

The Cytoplasmic segment spans residues 1 to 3 (MVD). A helical transmembrane segment spans residues 4 to 38 (EHKAHKAILAYEKGWLAFSLAMLFVFIALIAYTLA). At 39–168 (THTAGVIPAG…NMFGTIVVKE (130 aa)) the chain is on the periplasmic side. The Cu cation site is built by His114, Cys149, Cys153, and His157.

The protein belongs to the cytochrome c oxidase subunit 2 family.

The protein localises to the cell membrane. It catalyses the reaction 4 Fe(II)-[cytochrome c] + O2 + 8 H(+)(in) = 4 Fe(III)-[cytochrome c] + 2 H2O + 4 H(+)(out). Its function is as follows. Subunits I and II form the functional core of the enzyme complex. Electrons originating in cytochrome c are transferred via heme a and Cu(A) to the binuclear center formed by heme a3 and Cu(B). The sequence is that of Cytochrome c oxidase subunit 2 (cbaB) from Thermus thermophilus (strain ATCC 27634 / DSM 579 / HB8).